Here is a 97-residue protein sequence, read N- to C-terminus: Protein transport protein SFT1 (97 aa).

Topologically, residues M1–N74 are cytoplasmic. The t-SNARE coiled-coil homology domain occupies S7–S69. A helical; Anchor for type IV membrane protein transmembrane segment spans residues S75–F94. The Lumenal segment spans residues K95–F97.

As to quaternary structure, component of a SNARE complex consisting of SED5, GOS1, YKT6 and SFT1.

Its subcellular location is the golgi apparatus membrane. Its function is as follows. Vesicle SNARE required for retrograde transport within the Golgi complex. This is Protein transport protein SFT1 (SFT1) from Saccharomyces cerevisiae (strain ATCC 204508 / S288c) (Baker's yeast).